The following is an 833-amino-acid chain: G-type lectin S-receptor-like serine/threonine-protein kinase RKS1 (833 aa).

Residues 1–18 (MKVVFVIFFFFLFQFCIS) form the signal peptide. Positions 19–144 (VDTIMRRQSL…VTGRSFWESF (126 aa)) constitute a Bulb-type lectin domain. The Extracellular portion of the chain corresponds to 19–440 (VDTIMRRQSL…NGLSGKRRVL (422 aa)). 6 N-linked (GlcNAc...) asparagine glycosylation sites follow: asparagine 79, asparagine 92, asparagine 100, asparagine 109, asparagine 228, and asparagine 256. The 51-residue stretch at 280–330 (PKEQCDNYAHCGPNGYCDSPSSKTFECTCLPGFEPKFPRHWFLRDSSGGCT) folds into the EGF-like domain. 3 disulfide bridges follow: cysteine 284/cysteine 296, cysteine 290/cysteine 306, and cysteine 308/cysteine 329. The region spanning 338-421 (CSEKDGFVKL…SGQDFYIRVD (84 aa)) is the PAN domain. N-linked (GlcNAc...) asparagine glycosylation is found at asparagine 363 and asparagine 376. 2 cysteine pairs are disulfide-bonded: cysteine 369–cysteine 396 and cysteine 373–cysteine 379. The helical transmembrane segment at 441–461 (LILISLIAAVMLLTVILFCVV) threads the bilayer. The Cytoplasmic segment spans residues 462-833 (RERRKSNRHR…DVTFSDIQGR (372 aa)). The 286-residue stretch at 515–800 (FSSQNKLGAG…NLPNPKHPAF (286 aa)) folds into the Protein kinase domain. Residues 521 to 529 (LGAGGFGPV) and lysine 543 each bind ATP. Serine 549 and serine 564 each carry phosphoserine. The segment at 604–621 (EQRAELDWPKRMEIVRGI) is caM-binding. The active-site Proton acceptor is the aspartate 640. A phosphoserine mark is found at serine 644 and serine 657. Threonine 674 is subject to Phosphothreonine. 2 positions are modified to phosphoserine: serine 717 and serine 821.

This sequence belongs to the protein kinase superfamily. Ser/Thr protein kinase family.

The protein localises to the cell membrane. The catalysed reaction is L-seryl-[protein] + ATP = O-phospho-L-seryl-[protein] + ADP + H(+). It catalyses the reaction L-threonyl-[protein] + ATP = O-phospho-L-threonyl-[protein] + ADP + H(+). The protein is G-type lectin S-receptor-like serine/threonine-protein kinase RKS1 (RKS1) of Arabidopsis thaliana (Mouse-ear cress).